The sequence spans 385 residues: MHAWEAPGSLSRALPLASSVLMLLLSCLWLLGAGPSLRLAPELLMEPWQVHRLLTHALGHTALPGLLLSLLLLPTLGWWQECHLGTVRFLHNSTVLALATGLLAVLLAGLGVSGAAGGCGYMPVHLAMLAGQSHHPGWPQRTLPPWLLPWLLLALTLLLSSEPPFLQLLCGLLTGLAYAAGAFQWLELSEQRLQVLQEGVLCKSLARCWPLRLFPTPGSLGELPVTYPAGVRPATPRPPYLASSDSWPHSDGSAQLPPRLGPGQLTWKNSERGLDWAGSSFASATTMWAALDEQMLQEGIQASLLDVSVQGSQSSLWLPKPSVSSLRLQQLQHMGFPTEQAAVALAATGRVEGAVSLLVEGLVDTEALVTEGRSSPAHCTGTGAS.

A run of 5 helical transmembrane segments spans residues 13–33 (ALPLASSVLMLLLSCLWLLGA), 58–78 (LGHTALPGLLLSLLLLPTLGW), 95–115 (VLALATGLLAVLLAGLGVSGA), 146–166 (WLLPWLLLALTLLLSSEPPFL), and 168–188 (LLCGLLTGLAYAAGAFQWLEL). Residues 238-264 (PPYLASSDSWPHSDGSAQLPPRLGPGQ) form a disordered region. The 40-residue stretch at 322–361 (SVSSLRLQQLQHMGFPTEQAAVALAATGRVEGAVSLLVEG) folds into the UBA domain.

It is found in the membrane. This chain is Rhomboid domain-containing protein 3 (Rhbdd3), found in Mus musculus (Mouse).